The following is a 53-amino-acid chain: UPF0391 membrane protein YtjA (53 aa).

2 helical membrane passes run 4-24 (WGIIFLVIALIAAALGFGGLA) and 30-48 (AAKIVFVVGIILFLVSLFM).

This sequence belongs to the UPF0391 family.

It localises to the cell membrane. In Escherichia coli O6:K15:H31 (strain 536 / UPEC), this protein is UPF0391 membrane protein YtjA.